The sequence spans 168 residues: Protein DESIGUAL 2 (168 aa).

Positions 1–20 are cleaved as a signal peptide; it reads MARNVGFFICILILAMDVSA. The next 3 helical transmembrane spans lie at 56-76, 94-114, and 133-153; these read LAACILLVLAHVTANFLGGCL, AVASLIFTWIILAIAFSMLIV, and VLSIGGILCFVHGLFAVAYYI.

Belongs to the DESIGUAL family. In terms of tissue distribution, mainly expressed in roots, inflorescences and developing leaves, and, at low levels, in mature leaves.

Its subcellular location is the endoplasmic reticulum membrane. Functionally, involved, partially redundantly with VCC/DEAL1 and DEAL3, to ensure bilateral symmetry development and early leaf margin patterning, probably via the regulation of auxin and CUC2 distribution. In Arabidopsis thaliana (Mouse-ear cress), this protein is Protein DESIGUAL 2.